An 81-amino-acid chain; its full sequence is Sulfur carrier protein TusA (81 aa).

Residue C19 is the Cysteine persulfide intermediate of the active site.

It belongs to the sulfur carrier protein TusA family. As to quaternary structure, interacts with IscS.

The protein resides in the cytoplasm. Its pathway is tRNA modification. In terms of biological role, sulfur carrier protein involved in sulfur trafficking in the cell. Part of a sulfur-relay system required for 2-thiolation during synthesis of 2-thiouridine of the modified wobble base 5-methylaminomethyl-2-thiouridine (mnm(5)s(2)U) in tRNA. Interacts with IscS and stimulates its cysteine desulfurase activity. Accepts an activated sulfur from IscS, which is then transferred to TusD, and thus determines the direction of sulfur flow from IscS to 2-thiouridine formation. Also appears to be involved in sulfur transfer for the biosynthesis of molybdopterin. The polypeptide is Sulfur carrier protein TusA (Cronobacter sakazakii (strain ATCC BAA-894) (Enterobacter sakazakii)).